A 204-amino-acid polypeptide reads, in one-letter code: uncharacterized protein (204 aa).

The next 6 membrane-spanning stretches (helical) occupy residues 19 to 39 (TANP…LLNL), 42 to 62 (AGLF…GGIA), 78 to 98 (GTVA…LLVI), 116 to 136 (PVAM…MFIA), 143 to 163 (GIQV…AGEI), and 167 to 187 (ALIT…AMYV).

This sequence belongs to the acetate uptake transporter (AceTr) (TC 2.A.96) family.

The protein localises to the cell membrane. This is an uncharacterized protein from Methanothermobacter thermautotrophicus (strain ATCC 29096 / DSM 1053 / JCM 10044 / NBRC 100330 / Delta H) (Methanobacterium thermoautotrophicum).